Consider the following 322-residue polypeptide: uncharacterized protein (322 aa).

2 stretches are compositionally biased toward basic residues: residues 1–16 and 43–61; these read MPGN…KSGT and LRPH…RRPV. Positions 1-69 are disordered; sequence MPGNSRRRGA…PVKRADETET (69 aa). The S-adenosyl-L-methionine site is built by Gly261, Ile281, and Leu290.

It belongs to the class IV-like SAM-binding methyltransferase superfamily. RNA methyltransferase TrmH family.

This is an uncharacterized protein from Mycobacterium bovis (strain BCG / Pasteur 1173P2).